The sequence spans 537 residues: NEDD4-binding protein 3 (537 aa).

S172 carries the post-translational modification Phosphoserine. Disordered regions lie at residues 173 to 234 (LDEG…VLSC), 328 to 361 (KELRAQQGLAPEPRTSGSSMEADPNARPEEEARW), and 423 to 458 (QEQAPREEAPGSCETDDCKSRGLLGEAGGSEAREGA). Residues 178-207 (PEPSLSDSSSGGSFGRSPGTGPSPFSSSLG) are compositionally biased toward low complexity. Residues 295–501 (VERLHEVAQK…RVLRYQREIQ (207 aa)) are a coiled coil. Residues 351–361 (PNARPEEEARW) are compositionally biased toward basic and acidic residues.

The protein belongs to the N4BP3 family. Binds NEDD4. Interacts with 14-3-3 proteins. Interacts with MAVS.

The protein resides in the cytoplasmic vesicle. The protein localises to the cell projection. Its subcellular location is the axon. It localises to the dendrite. In terms of biological role, plays a positive role in the antiviral innate immune signaling pathway. Mechanistically, interacts with MAVS and functions as a positive regulator to promote 'Lys-63'-linked polyubiquitination of MAVS and thus strengthens the interaction between MAVS and TRAF2. Also plays a role in axon and dendrite arborization during cranial nerve development. May also be important for neural crest migration and early development of other anterior structures including eye, brain and cranial cartilage. The chain is NEDD4-binding protein 3 (N4bp3) from Mus musculus (Mouse).